A 174-amino-acid polypeptide reads, in one-letter code: Dual-action ribosomal maturation protein DarP (174 aa).

It belongs to the DarP family.

The protein localises to the cytoplasm. Its function is as follows. Member of a network of 50S ribosomal subunit biogenesis factors which assembles along the 30S-50S interface, preventing incorrect 23S rRNA structures from forming. Promotes peptidyl transferase center (PTC) maturation. The chain is Dual-action ribosomal maturation protein DarP from Pseudomonas paraeruginosa (strain DSM 24068 / PA7) (Pseudomonas aeruginosa (strain PA7)).